A 259-amino-acid chain; its full sequence is Haloacid dehalogenase-like hydrolase domain-containing protein 2 (259 aa).

Residues aspartate 13 and serine 15 each coordinate Mg(2+). Residues 13 to 15 (DLS) and 46 to 47 (TN) contribute to the substrate site. Residues 49 to 71 (TKESKRDLLERLRKLEFDISEEE) are a coiled coil. Position 50 is an N6-succinyllysine (lysine 50). Residue lysine 179 participates in substrate binding. Aspartate 204 contributes to the Mg(2+) binding site.

Belongs to the HAD-like hydrolase superfamily. Mg(2+) serves as cofactor.

The protein is Haloacid dehalogenase-like hydrolase domain-containing protein 2 (Hdhd2) of Rattus norvegicus (Rat).